A 216-amino-acid polypeptide reads, in one-letter code: Protein ADP-ribose pyrophosphatase ORF38 (216 aa).

The Nudix hydrolase domain occupies 1-177 (MRNAAGLFMI…DYSNYIEFFD (177 aa)). The Nudix box motif lies at 48 to 70 (GHRDCCDAKVYETAVREFVEETG).

The protein resides in the host cytoplasm. The protein localises to the host nucleus. It carries out the reaction ADP-D-ribose + H2O = D-ribose 5-phosphate + AMP + 2 H(+). Plays an important role in virus replication most probably through its hydrolyzing ADP-ribose activity in host cells. May function in viral DNA replication or transcription directly, or by removing toxic substances or metabolic intermediates. This chain is Protein ADP-ribose pyrophosphatase ORF38, found in Lepidoptera (butterflies and moths).